Reading from the N-terminus, the 170-residue chain is Non-structural protein 5 (170 aa).

2 disordered regions span residues 1–67 (MAEA…KREP) and 83–106 (SEDE…MKRK). Over residues 17 to 38 (TMSDRRTREDTKQKKIEEKSDI) the composition is skewed to basic and acidic residues. A compositionally biased stretch (polar residues) spans 45-57 (SVYSQESSRSNYS).

The protein belongs to the rotavirus NSP5 family. Homodimer. Interacts with VP1. Interacts with VP2. Interacts with NSP2 and NSP6. Post-translationally, O-glycosylated.

The protein resides in the host cytoplasm. In terms of biological role, plays an essential role in the viral genome replication. Participates, together with NSP2, in the formation of viral factories (viroplasms) which are large inclusions in the host cytoplasm where replication intermediates are assembled and viral RNA replication takes place. Orchestrates the recruitment of viroplasmic proteins such as capsid proteins to these factories. In Rotavirus B (isolate RVB/Human/China/ADRV/1982) (RV-B), this protein is Non-structural protein 5.